We begin with the raw amino-acid sequence, 428 residues long: Histidinol dehydrogenase (428 aa).

Residues Tyr-124, Gln-186, and Asn-209 each coordinate NAD(+). Ser-233, Gln-255, and His-258 together coordinate substrate. Zn(2+) is bound by residues Gln-255 and His-258. Active-site proton acceptor residues include Glu-322 and His-323. Residues His-323, Asp-356, Glu-410, and His-415 each coordinate substrate. Asp-356 contributes to the Zn(2+) binding site. His-415 is a Zn(2+) binding site.

The protein belongs to the histidinol dehydrogenase family. Zn(2+) serves as cofactor.

It catalyses the reaction L-histidinol + 2 NAD(+) + H2O = L-histidine + 2 NADH + 3 H(+). Its pathway is amino-acid biosynthesis; L-histidine biosynthesis; L-histidine from 5-phospho-alpha-D-ribose 1-diphosphate: step 9/9. In terms of biological role, catalyzes the sequential NAD-dependent oxidations of L-histidinol to L-histidinaldehyde and then to L-histidine. The sequence is that of Histidinol dehydrogenase from Bacteroides fragilis (strain YCH46).